A 185-amino-acid chain; its full sequence is Ribosome-recycling factor (185 aa).

The protein belongs to the RRF family.

Its subcellular location is the cytoplasm. Functionally, responsible for the release of ribosomes from messenger RNA at the termination of protein biosynthesis. May increase the efficiency of translation by recycling ribosomes from one round of translation to another. This Chromohalobacter salexigens (strain ATCC BAA-138 / DSM 3043 / CIP 106854 / NCIMB 13768 / 1H11) protein is Ribosome-recycling factor.